Reading from the N-terminus, the 862-residue chain is Probable alpha,alpha-trehalose-phosphate synthase [UDP-forming] 11 (862 aa).

S5 carries the phosphoserine modification. Residues P50–R538 form a glycosyltransferase region. Residues S838–A862 form a disordered region.

The protein in the N-terminal section; belongs to the glycosyltransferase 20 family. This sequence in the C-terminal section; belongs to the trehalose phosphatase family. Expressed in leaves, roots, stems and flowers.

The catalysed reaction is D-glucose 6-phosphate + UDP-alpha-D-glucose = alpha,alpha-trehalose 6-phosphate + UDP + H(+). This chain is Probable alpha,alpha-trehalose-phosphate synthase [UDP-forming] 11 (TPS11), found in Arabidopsis thaliana (Mouse-ear cress).